The following is a 221-amino-acid chain: uncharacterized protein (221 aa).

Residues 1–26 (MVRLVPRAFAATVALLAAGFSPATAS) form the signal peptide.

This is an uncharacterized protein from Mycobacterium tuberculosis (strain ATCC 25618 / H37Rv).